A 134-amino-acid polypeptide reads, in one-letter code: Small ribosomal subunit protein uS8c (134 aa).

This sequence belongs to the universal ribosomal protein uS8 family. In terms of assembly, part of the 30S ribosomal subunit.

It is found in the plastid. In terms of biological role, one of the primary rRNA binding proteins, it binds directly to 16S rRNA central domain where it helps coordinate assembly of the platform of the 30S subunit. The polypeptide is Small ribosomal subunit protein uS8c (rps8) (Epifagus virginiana (Beechdrops)).